Here is a 219-residue protein sequence, read N- to C-terminus: Adenylate kinase (219 aa).

13–18 (GAGKGT) serves as a coordination point for ATP. Residues 33 to 62 (STGDIFRAAIKNETKMGLEAKKYIDAGNLV) form an NMP region. Residues T34, R39, 60-62 (NLV), 88-91 (GYPR), and Q95 contribute to the AMP site. The segment at 129 to 167 (GRFICRTCGATYHKLYNKPKVEGTCDVCGGHDFYQRDDD) is LID. R130 lines the ATP pocket. Zn(2+) is bound by residues C133 and C136. 139-140 (TY) contacts ATP. Residues C153 and C156 each contribute to the Zn(2+) site. AMP-binding residues include R164 and R175. ATP is bound at residue R203.

The protein belongs to the adenylate kinase family. In terms of assembly, monomer.

Its subcellular location is the cytoplasm. It catalyses the reaction AMP + ATP = 2 ADP. Its pathway is purine metabolism; AMP biosynthesis via salvage pathway; AMP from ADP: step 1/1. Catalyzes the reversible transfer of the terminal phosphate group between ATP and AMP. Plays an important role in cellular energy homeostasis and in adenine nucleotide metabolism. The sequence is that of Adenylate kinase from Lactiplantibacillus plantarum (strain ATCC BAA-793 / NCIMB 8826 / WCFS1) (Lactobacillus plantarum).